Consider the following 288-residue polypeptide: MAEKKQWHETLHDQFGQYFAVDNVLYHEKTDHQDLIIFENAAFGRVMALDGVVQTTERDEFIYHEMMTHVPLLAHGHAKHVLIIGGGDGAMLREVTRHKNVESITMVEIDAGVVSFCRQYLPNHNAGSYDDPRFKLVIDDGVNFVNQTSQTFDVIISDCTDPIGPGESLFTSAFYEGCKRCLNPGGIFVAQNGVCFLQQEEAIDSHRKLSHYFSDVGFYQAAIPTYYGGIMTFAWATDNDALRHLSTEIIQARFLASGLKCRYYNPAIHTAAFALPQYLQDALASQPS.

Residues glutamate 9–aspartate 238 enclose the PABS domain. Glutamine 33 lines the S-methyl-5'-thioadenosine pocket. 2 residues coordinate spermidine: histidine 64 and aspartate 88. S-methyl-5'-thioadenosine-binding positions include glutamate 108 and aspartate 140–glycine 141. Aspartate 158 (proton acceptor) is an active-site residue. Aspartate 158–aspartate 161 is a spermidine binding site. Proline 165 contributes to the S-methyl-5'-thioadenosine binding site.

This sequence belongs to the spermidine/spermine synthase family. In terms of assembly, homodimer or homotetramer.

Its subcellular location is the cytoplasm. It carries out the reaction S-adenosyl 3-(methylsulfanyl)propylamine + putrescine = S-methyl-5'-thioadenosine + spermidine + H(+). It functions in the pathway amine and polyamine biosynthesis; spermidine biosynthesis; spermidine from putrescine: step 1/1. Functionally, catalyzes the irreversible transfer of a propylamine group from the amino donor S-adenosylmethioninamine (decarboxy-AdoMet) to putrescine (1,4-diaminobutane) to yield spermidine. The sequence is that of Polyamine aminopropyltransferase from Escherichia coli (strain ATCC 8739 / DSM 1576 / NBRC 3972 / NCIMB 8545 / WDCM 00012 / Crooks).